A 207-amino-acid chain; its full sequence is dTTP/UTP pyrophosphatase (207 aa).

The active-site Proton acceptor is Asp79.

It belongs to the Maf family. YhdE subfamily. It depends on a divalent metal cation as a cofactor.

It localises to the cytoplasm. It carries out the reaction dTTP + H2O = dTMP + diphosphate + H(+). The enzyme catalyses UTP + H2O = UMP + diphosphate + H(+). Its function is as follows. Nucleoside triphosphate pyrophosphatase that hydrolyzes dTTP and UTP. May have a dual role in cell division arrest and in preventing the incorporation of modified nucleotides into cellular nucleic acids. The protein is dTTP/UTP pyrophosphatase of Nitrobacter hamburgensis (strain DSM 10229 / NCIMB 13809 / X14).